The sequence spans 116 residues: Large ribosomal subunit protein uL18 (116 aa).

It belongs to the universal ribosomal protein uL18 family. In terms of assembly, part of the 50S ribosomal subunit; part of the 5S rRNA/L5/L18/L25 subcomplex. Contacts the 5S and 23S rRNAs.

This is one of the proteins that bind and probably mediate the attachment of the 5S RNA into the large ribosomal subunit, where it forms part of the central protuberance. This chain is Large ribosomal subunit protein uL18, found in Mycoplasma capricolum subsp. capricolum (strain California kid / ATCC 27343 / NCTC 10154).